The following is a 122-amino-acid chain: UPF0102 protein VIBHAR_00890 (122 aa).

Belongs to the UPF0102 family.

The protein is UPF0102 protein VIBHAR_00890 of Vibrio campbellii (strain ATCC BAA-1116).